Reading from the N-terminus, the 269-residue chain is Putative hydro-lyase Atu3911 (269 aa).

The protein belongs to the D-glutamate cyclase family.

This Agrobacterium fabrum (strain C58 / ATCC 33970) (Agrobacterium tumefaciens (strain C58)) protein is Putative hydro-lyase Atu3911.